The sequence spans 477 residues: tRNA-2-methylthio-N(6)-dimethylallyladenosine synthase (477 aa).

An MTTase N-terminal domain is found at 3–120 (KKLHIKTWGC…LPAMIKQVQE (118 aa)). Residues Cys12, Cys49, Cys83, Cys157, Cys161, and Cys164 each coordinate [4Fe-4S] cluster. Residues 143–375 (RAEGATAFVS…QHVINNQSMQ (233 aa)) form the Radical SAM core domain. The TRAM domain occupies 378 to 441 (RAMLGSTQRI…PNSLRGRFIR (64 aa)).

The protein belongs to the methylthiotransferase family. MiaB subfamily. Monomer. The cofactor is [4Fe-4S] cluster.

It is found in the cytoplasm. It carries out the reaction N(6)-dimethylallyladenosine(37) in tRNA + (sulfur carrier)-SH + AH2 + 2 S-adenosyl-L-methionine = 2-methylsulfanyl-N(6)-dimethylallyladenosine(37) in tRNA + (sulfur carrier)-H + 5'-deoxyadenosine + L-methionine + A + S-adenosyl-L-homocysteine + 2 H(+). Catalyzes the methylthiolation of N6-(dimethylallyl)adenosine (i(6)A), leading to the formation of 2-methylthio-N6-(dimethylallyl)adenosine (ms(2)i(6)A) at position 37 in tRNAs that read codons beginning with uridine. In Aeromonas salmonicida (strain A449), this protein is tRNA-2-methylthio-N(6)-dimethylallyladenosine synthase.